The primary structure comprises 433 residues: Putative purine permease YbbY (433 aa).

The Periplasmic segment spans residues Met1–Trp17. A helical membrane pass occupies residues Phe18 to Leu38. Over Pro39–Ser42 the chain is Cytoplasmic. A helical membrane pass occupies residues Leu43–Phe63. Over Cys64–Arg68 the chain is Periplasmic. A helical membrane pass occupies residues Ala69–Glu89. The Cytoplasmic portion of the chain corresponds to Ala90–Ser102. A helical membrane pass occupies residues Leu103–Gly123. Over His124–Phe130 the chain is Periplasmic. The chain crosses the membrane as a helical span at residues Thr131–Phe151. The Cytoplasmic portion of the chain corresponds to Lys152–Gln169. Residues Leu170–Leu190 form a helical membrane-spanning segment. Topologically, residues Pro191–Arg196 are periplasmic. Residues Tyr197–Ser217 traverse the membrane as a helical segment. Over His218 to Pro230 the chain is Cytoplasmic. Residues Leu231–Val251 traverse the membrane as a helical segment. Residues Asn252–Thr288 are Periplasmic-facing. Residues Leu289–Leu309 form a helical membrane-spanning segment. Residues Thr310–Ser319 are Cytoplasmic-facing. The chain crosses the membrane as a helical span at residues Phe320–Phe340. Over Cys341 to Leu345 the chain is Periplasmic. Residues Pro346 to Phe366 traverse the membrane as a helical segment. The Cytoplasmic portion of the chain corresponds to Ser367–Arg379. Residues Leu380–Asp400 traverse the membrane as a helical segment. Topologically, residues Leu401–Pro407 are periplasmic. A helical transmembrane segment spans residues Leu408–Pro428. The Cytoplasmic segment spans residues Trp429–Glu433.

It belongs to the nucleobase:cation symporter-2 (NCS2) (TC 2.A.40) family.

The protein resides in the cell inner membrane. This is Putative purine permease YbbY (ybbY) from Escherichia coli (strain K12).